The following is a 476-amino-acid chain: MPMSLRLHNNLTRRVEPFTPLDPSSPTLYVCGPTVYNYAHIGNARGPVVFDVLAALLRRRYGALRYARNITDVDDKINAAAQAQGVPISTITDRFAAIYRQDMAALGVVPPDIEPEATAHIPQIVAMIEQLIANGHAYAAEGHVLFSVSSFEDYGKLSRRDPDEMLAGARVDVAPYKRDPGDFVLWKPSSDELPGWESPWGRGRPGWHIECSAMAAAHLGPTIDIHAGGVDLQFPHHENEIAQSECAHGGATFARFWLHNGMLNFSGAKMSKSLGNIETVHDLIAKHPPEALRYALLSAHYRQPLDWSDGLIEQATNTLDRLYGTLRDLAALEACGSSGVEVSKTIPVEVESALQDDLNTPLALSVIASIASEARALRNELVHGGEPSARMSELHAVRAKLLGAGLALGLLQQDPAAWFSRGTDADDDARITALVQERSAAKKAKDFARADAIRKQLADEGIVLEDTPQGVRWKRA.

Residue Cys-31 coordinates Zn(2+). The short motif at 33-43 (PTVYNYAHIGN) is the 'HIGH' region element. Cys-211, His-236, and Glu-240 together coordinate Zn(2+). Positions 269–273 (KMSKS) match the 'KMSKS' region motif. ATP is bound at residue Lys-272.

Belongs to the class-I aminoacyl-tRNA synthetase family. As to quaternary structure, monomer. It depends on Zn(2+) as a cofactor.

It localises to the cytoplasm. It carries out the reaction tRNA(Cys) + L-cysteine + ATP = L-cysteinyl-tRNA(Cys) + AMP + diphosphate. The chain is Cysteine--tRNA ligase from Xanthomonas oryzae pv. oryzae (strain MAFF 311018).